A 256-amino-acid polypeptide reads, in one-letter code: L-rhamnose 1-dehydrogenase (NAD(P)(+)) (256 aa).

8 residues coordinate NADP(+): Gly-12, Ser-14, Arg-15, Ile-17, Ser-37, Asp-66, Ala-67, and Asn-93. The Proton donor role is filled by Ser-146. Beta-L-rhamnose is bound by residues Ser-146, Ser-148, Gln-156, and Tyr-159. Residues Tyr-159 and Lys-163 each coordinate NADP(+). The active-site Proton acceptor is the Tyr-159. The Lowers pKa of active site Tyr role is filled by Lys-163. Thr-191 provides a ligand contact to beta-L-rhamnose. Ile-192 is a binding site for NADP(+). Asn-197 contributes to the beta-L-rhamnose binding site.

It belongs to the short-chain dehydrogenases/reductases (SDR) family.

It catalyses the reaction L-rhamnofuranose + NAD(+) = L-rhamnono-1,4-lactone + NADH + H(+). The catalysed reaction is L-rhamnofuranose + NADP(+) = L-rhamnono-1,4-lactone + NADPH + H(+). It participates in carbohydrate degradation; L-rhamnose degradation. NAD(P)-dependent dehydrogenase that catalyzes the oxidation of L-rhamnose to L-rhamnono-1,4-lactone. Also shows high activity with L-lyxose and low activity with L-mannose and L-fucose. Can utilize either NAD(+) or NADP(+), with a strong preference for NADP(+). Catalyzes the first step in an alternative pathway for rhamnose utilization that does not involve phosphorylated intermediates. The protein is L-rhamnose 1-dehydrogenase (NAD(P)(+)) of Azotobacter vinelandii (strain DJ / ATCC BAA-1303).